Consider the following 189-residue polypeptide: Interferon alpha-13 (189 aa).

Positions 1–23 (MARPCAFLMVLVVLSYWSACSLG) are cleaved as a signal peptide. Cystine bridges form between C24-C122 and C52-C162. N-linked (GlcNAc...) asparagine glycans are attached at residues N94 and N101.

It belongs to the alpha/beta interferon family.

It is found in the secreted. In terms of biological role, exhibits antiviral activity against Theiler's virus, Mengo virus and vesicular stomatitis virus. Interferons alpha stimulate the production of two enzymes: a protein kinase and an oligoadenylate synthetase. The sequence is that of Interferon alpha-13 (Ifna13) from Mus musculus (Mouse).